The chain runs to 187 residues: UPF0301 protein ESA_00394 (187 aa).

It belongs to the UPF0301 (AlgH) family.

The polypeptide is UPF0301 protein ESA_00394 (Cronobacter sakazakii (strain ATCC BAA-894) (Enterobacter sakazakii)).